The following is a 133-amino-acid chain: FPRL1 inhibitory protein (133 aa).

An N-terminal signal peptide occupies residues 1–28 (MKKNITKTIIASTVIAAGLLTQTNDAKA).

The protein belongs to the CHIPS/FLIPr family.

It is found in the secreted. Its function is as follows. May be involved in countering the first line of host defense mechanisms. Impairs the leukocyte response to FPRL1 agonists by binding directly to host FPRL1. The chain is FPRL1 inhibitory protein (flr) from Staphylococcus aureus (strain USA300).